Reading from the N-terminus, the 296-residue chain is tRNA dimethylallyltransferase (296 aa).

An ATP-binding site is contributed by 10-17; that stretch reads GPTASGKT. Residue 12–17 participates in substrate binding; sequence TASGKT. An interaction with substrate tRNA region spans residues 35–38; that stretch reads DSRQ.

It belongs to the IPP transferase family. Monomer. Mg(2+) is required as a cofactor.

It carries out the reaction adenosine(37) in tRNA + dimethylallyl diphosphate = N(6)-dimethylallyladenosine(37) in tRNA + diphosphate. In terms of biological role, catalyzes the transfer of a dimethylallyl group onto the adenine at position 37 in tRNAs that read codons beginning with uridine, leading to the formation of N6-(dimethylallyl)adenosine (i(6)A). The polypeptide is tRNA dimethylallyltransferase (Synechococcus sp. (strain RCC307)).